The following is a 534-amino-acid chain: N-acetylglutamate synthase, mitochondrial (534 aa).

Residues 1–18 (MATALMAVVLRAAAVAPR) constitute a mitochondrion transit peptide. A disordered region spans residues 19 to 99 (LRGRGGTGGA…HESPEPPSGR (81 aa)). The interval 19–376 (LRGRGGTGGA…SGTLFKNAER (358 aa)) is amino-acid kinase domain (AAK). Positions 81-96 (VPSPRPPVPHESPEPP) are enriched in pro residues. An N-acetyltransferase domain is found at 375 to 526 (ERMLRVRSLD…HAKGLPDSFH (152 aa)). Residues K401, K444, and 474-479 (RSRVTN) each bind substrate.

The protein belongs to the acetyltransferase family. Homodimer. Homotetramer. In terms of processing, probably processed by mitochondrial processing peptidase (MPP). The long form has not yet been isolated. Highly expressed in the adult liver, kidney and small intestine. Weakly expressed in the fetal liver, lung, pancreas, placenta, heart and brain tissue.

Its subcellular location is the mitochondrion matrix. The enzyme catalyses L-glutamate + acetyl-CoA = N-acetyl-L-glutamate + CoA + H(+). Its pathway is amino-acid biosynthesis; L-arginine biosynthesis; N(2)-acetyl-L-ornithine from L-glutamate: step 1/4. With respect to regulation, increased by L-arginine. Functionally, plays a role in the regulation of ureagenesis by producing the essential cofactor N-acetylglutamate (NAG), thus modulating carbamoylphosphate synthase I (CPS1) activity. This is N-acetylglutamate synthase, mitochondrial (NAGS) from Homo sapiens (Human).